Consider the following 396-residue polypeptide: Large ribosomal subunit protein uL24m (396 aa).

The segment at 374–396 is disordered; that stretch reads QLSLGGGQEDAATTTSPEQPKVV. Residues 384–396 are compositionally biased toward polar residues; that stretch reads AATTTSPEQPKVV.

This sequence belongs to the universal ribosomal protein uL24 family. As to quaternary structure, component of the mitochondrial large ribosomal subunit (mt-LSU). Mature N.crassa 74S mitochondrial ribosomes consist of a small (37S) and a large (54S) subunit. The 37S small subunit contains a 16S ribosomal RNA (16S mt-rRNA) and 32 different proteins. The 54S large subunit contains a 23S rRNA (23S mt-rRNA) and 42 different proteins. uL24m forms the wall of the exit tunnel.

The protein localises to the mitochondrion. Component of the mitochondrial ribosome (mitoribosome), a dedicated translation machinery responsible for the synthesis of mitochondrial genome-encoded proteins, including at least some of the essential transmembrane subunits of the mitochondrial respiratory chain. The mitoribosomes are attached to the mitochondrial inner membrane and translation products are cotranslationally integrated into the membrane. In Neurospora crassa (strain ATCC 24698 / 74-OR23-1A / CBS 708.71 / DSM 1257 / FGSC 987), this protein is Large ribosomal subunit protein uL24m (mrpl40).